Reading from the N-terminus, the 120-residue chain is Large ribosomal subunit protein uL18 (120 aa).

The protein belongs to the universal ribosomal protein uL18 family. In terms of assembly, part of the 50S ribosomal subunit; part of the 5S rRNA/L5/L18/L25 subcomplex. Contacts the 5S and 23S rRNAs.

In terms of biological role, this is one of the proteins that bind and probably mediate the attachment of the 5S RNA into the large ribosomal subunit, where it forms part of the central protuberance. This chain is Large ribosomal subunit protein uL18, found in Allorhizobium ampelinum (strain ATCC BAA-846 / DSM 112012 / S4) (Agrobacterium vitis (strain S4)).